We begin with the raw amino-acid sequence, 347 residues long: Quinolinate synthase (347 aa).

The iminosuccinate site is built by histidine 47 and serine 68. Cysteine 113 is a binding site for [4Fe-4S] cluster. Iminosuccinate is bound by residues 139-141 (YAN) and serine 156. [4Fe-4S] cluster is bound at residue cysteine 200. Iminosuccinate is bound by residues 226–228 (HPE) and threonine 243. Cysteine 297 serves as a coordination point for [4Fe-4S] cluster.

Belongs to the quinolinate synthase family. Type 1 subfamily. [4Fe-4S] cluster serves as cofactor.

Its subcellular location is the cytoplasm. The enzyme catalyses iminosuccinate + dihydroxyacetone phosphate = quinolinate + phosphate + 2 H2O + H(+). It functions in the pathway cofactor biosynthesis; NAD(+) biosynthesis; quinolinate from iminoaspartate: step 1/1. In terms of biological role, catalyzes the condensation of iminoaspartate with dihydroxyacetone phosphate to form quinolinate. The polypeptide is Quinolinate synthase (Shigella dysenteriae serotype 1 (strain Sd197)).